Reading from the N-terminus, the 399-residue chain is 4-hydroxy-3-methylbut-2-enyl diphosphate reductase (399 aa).

A [4Fe-4S] cluster-binding site is contributed by cysteine 66. Position 96 (histidine 96) interacts with (2E)-4-hydroxy-3-methylbut-2-enyl diphosphate. Position 96 (histidine 96) interacts with dimethylallyl diphosphate. An isopentenyl diphosphate-binding site is contributed by histidine 96. Cysteine 157 contributes to the [4Fe-4S] cluster binding site. Histidine 185 serves as a coordination point for (2E)-4-hydroxy-3-methylbut-2-enyl diphosphate. Residue histidine 185 coordinates dimethylallyl diphosphate. Histidine 185 is an isopentenyl diphosphate binding site. The active-site Proton donor is the glutamate 187. Threonine 250 is a (2E)-4-hydroxy-3-methylbut-2-enyl diphosphate binding site. Residue cysteine 288 coordinates [4Fe-4S] cluster. Serine 317, serine 318, asparagine 319, and serine 380 together coordinate (2E)-4-hydroxy-3-methylbut-2-enyl diphosphate. 4 residues coordinate dimethylallyl diphosphate: serine 317, serine 318, asparagine 319, and serine 380. Positions 317, 318, 319, and 380 each coordinate isopentenyl diphosphate.

Belongs to the IspH family. The cofactor is [4Fe-4S] cluster.

The catalysed reaction is isopentenyl diphosphate + 2 oxidized [2Fe-2S]-[ferredoxin] + H2O = (2E)-4-hydroxy-3-methylbut-2-enyl diphosphate + 2 reduced [2Fe-2S]-[ferredoxin] + 2 H(+). It carries out the reaction dimethylallyl diphosphate + 2 oxidized [2Fe-2S]-[ferredoxin] + H2O = (2E)-4-hydroxy-3-methylbut-2-enyl diphosphate + 2 reduced [2Fe-2S]-[ferredoxin] + 2 H(+). It participates in isoprenoid biosynthesis; dimethylallyl diphosphate biosynthesis; dimethylallyl diphosphate from (2E)-4-hydroxy-3-methylbutenyl diphosphate: step 1/1. The protein operates within isoprenoid biosynthesis; isopentenyl diphosphate biosynthesis via DXP pathway; isopentenyl diphosphate from 1-deoxy-D-xylulose 5-phosphate: step 6/6. Its function is as follows. Catalyzes the conversion of 1-hydroxy-2-methyl-2-(E)-butenyl 4-diphosphate (HMBPP) into a mixture of isopentenyl diphosphate (IPP) and dimethylallyl diphosphate (DMAPP). Acts in the terminal step of the DOXP/MEP pathway for isoprenoid precursor biosynthesis. In Synechococcus sp. (strain CC9605), this protein is 4-hydroxy-3-methylbut-2-enyl diphosphate reductase.